A 156-amino-acid polypeptide reads, in one-letter code: Ribosomal RNA large subunit methyltransferase H (156 aa).

Residues leucine 73, glycine 104, and 123-128 (VSSLTL) each bind S-adenosyl-L-methionine.

The protein belongs to the RNA methyltransferase RlmH family. As to quaternary structure, homodimer.

The protein resides in the cytoplasm. The enzyme catalyses pseudouridine(1915) in 23S rRNA + S-adenosyl-L-methionine = N(3)-methylpseudouridine(1915) in 23S rRNA + S-adenosyl-L-homocysteine + H(+). Specifically methylates the pseudouridine at position 1915 (m3Psi1915) in 23S rRNA. The polypeptide is Ribosomal RNA large subunit methyltransferase H (Burkholderia thailandensis (strain ATCC 700388 / DSM 13276 / CCUG 48851 / CIP 106301 / E264)).